Reading from the N-terminus, the 83-residue chain is MAVNVFTILQLAVFAAIVLNVNLHSVSADSKGTSDSQDSTKSIKVDFCETNCTKTDGGWTGCTGDCICVSVGDSIEGRCMDFG.

The signal sequence occupies residues 1–28; the sequence is MAVNVFTILQLAVFAAIVLNVNLHSVSA. 3 cysteine pairs are disulfide-bonded: Cys-48/Cys-66, Cys-52/Cys-68, and Cys-62/Cys-79. Residue Asn-51 is glycosylated (N-linked (GlcNAc...) asparagine).

It localises to the secreted. Its function is as follows. Salivary chemokine-binding protein which binds to host chemokines CXCL1, CXCL2, CXCL3, CXCL5, CXCL6, CXCL12 and CXCL13. The protein is Evasin P1124 of Ixodes ricinus (Common tick).